Here is a 471-residue protein sequence, read N- to C-terminus: UDP-N-acetylmuramate--L-alanine ligase (471 aa).

114–120 (GTHGKTT) lines the ATP pocket.

It belongs to the MurCDEF family.

The protein localises to the cytoplasm. It carries out the reaction UDP-N-acetyl-alpha-D-muramate + L-alanine + ATP = UDP-N-acetyl-alpha-D-muramoyl-L-alanine + ADP + phosphate + H(+). Its pathway is cell wall biogenesis; peptidoglycan biosynthesis. Its function is as follows. Cell wall formation. This Rhizobium meliloti (strain 1021) (Ensifer meliloti) protein is UDP-N-acetylmuramate--L-alanine ligase.